A 245-amino-acid chain; its full sequence is Hydrolase pyvD (245 aa).

Catalysis depends on residues Cys-133, Asp-179, and His-211.

The protein belongs to the dienelactone hydrolase family.

Its pathway is secondary metabolite biosynthesis. Functionally, hydrolase; part of the gene cluster that mediates the biosynthesis of pyranoviolin A, a pyranonigrin analog with a C-3 methoxy group. Initially, the PKS portion of pyvA synthesizes C-10 carbon chain from 5 molecules of malonyl-CoA, which is then condensed with the thiolation (T) domain-bound glycine activated by the adenylation (A) domain. The subsequent chain release by Dieckmann condensation (DKC) could be catalyzed by the TE domain present at the C-terminus of pyvA and/or the alpha/beta hydrolase pyvD, installing the tetramic acid moiety. The FAD-dependent monooxygenase pyvC next epoxidizes one of the olefins of the polyketide part, and the epoxide ring-opening induces the dihydro-gamma-pyrone ring formation. The cytochrome P450 monooxygeanse pyvB would be responsible for the 2 consecutive reactions, in which the dihydro-gamma-pyrone is oxidized to gamma-pyrone and C-7 is hydroxylated to yield pyranonigrin F. Finally, the O-methyltransferase pyvH methylates the C-3 hydroxy group to complete the biosynthesis. The polypeptide is Hydrolase pyvD (Aspergillus violaceofuscus (strain CBS 115571)).